Here is a 299-residue protein sequence, read N- to C-terminus: uncharacterized protein (299 aa).

Belongs to the glycosyltransferase 2 family.

This is an uncharacterized protein from Mycoplasma pneumoniae (strain ATCC 29342 / M129 / Subtype 1) (Mycoplasmoides pneumoniae).